A 224-amino-acid polypeptide reads, in one-letter code: Pyridoxine/pyridoxamine 5'-phosphate oxidase (224 aa).

Residues 19–22 (RGEY) and lysine 81 contribute to the substrate site. Residues 76 to 81 (RSVLCK), 91 to 92 (FT), lysine 98, and glutamine 120 contribute to the FMN site. Positions 138 and 142 each coordinate substrate. Residues 155–156 (QS) and tryptophan 201 contribute to the FMN site. Position 207-209 (207-209 (RMH)) interacts with substrate. Arginine 211 contributes to the FMN binding site.

The protein belongs to the pyridoxamine 5'-phosphate oxidase family. As to quaternary structure, homodimer. Requires FMN as cofactor.

The catalysed reaction is pyridoxamine 5'-phosphate + O2 + H2O = pyridoxal 5'-phosphate + H2O2 + NH4(+). It catalyses the reaction pyridoxine 5'-phosphate + O2 = pyridoxal 5'-phosphate + H2O2. It functions in the pathway cofactor metabolism; pyridoxal 5'-phosphate salvage; pyridoxal 5'-phosphate from pyridoxamine 5'-phosphate: step 1/1. It participates in cofactor metabolism; pyridoxal 5'-phosphate salvage; pyridoxal 5'-phosphate from pyridoxine 5'-phosphate: step 1/1. Its function is as follows. Catalyzes the oxidation of either pyridoxine 5'-phosphate (PNP) or pyridoxamine 5'-phosphate (PMP) into pyridoxal 5'-phosphate (PLP). This chain is Pyridoxine/pyridoxamine 5'-phosphate oxidase, found in Mycobacterium bovis (strain ATCC BAA-935 / AF2122/97).